The primary structure comprises 213 residues: Large ribosomal subunit protein uL1 (213 aa).

Belongs to the universal ribosomal protein uL1 family. In terms of assembly, part of the 50S ribosomal subunit.

Binds directly to 23S rRNA. Probably involved in E site tRNA release. Its function is as follows. Protein L1 is also a translational repressor protein, it controls the translation of its operon by binding to its mRNA. The polypeptide is Large ribosomal subunit protein uL1 (Methanococcus maripaludis (strain C6 / ATCC BAA-1332)).